The following is a 155-amino-acid chain: MAAPVTVRVQRDDFDIAAEVSALCRARTDIGAVVTFSGLCRDEAGALSALELEHYPGMAEAEIERICHEAVERFGLQAATAIHRFGRMEPGANIVLVATASPHRQAAFDGANFIMDFLKTSAPFWKKEHHADGSAGDWVSAKDADDAARDRWTRR.

Substrate is bound by residues 39 to 41, 103 to 104, lysine 119, and 126 to 128; these read LCR, HR, and KKE.

The protein belongs to the MoaE family. In terms of assembly, heterotetramer of 2 MoaD subunits and 2 MoaE subunits. Also stable as homodimer. The enzyme changes between these two forms during catalysis.

The enzyme catalyses 2 [molybdopterin-synthase sulfur-carrier protein]-C-terminal-Gly-aminoethanethioate + cyclic pyranopterin phosphate + H2O = molybdopterin + 2 [molybdopterin-synthase sulfur-carrier protein]-C-terminal Gly-Gly + 2 H(+). It participates in cofactor biosynthesis; molybdopterin biosynthesis. Converts molybdopterin precursor Z into molybdopterin. This requires the incorporation of two sulfur atoms into precursor Z to generate a dithiolene group. The sulfur is provided by MoaD. The protein is Molybdopterin synthase catalytic subunit (moaE) of Rhizobium meliloti (strain 1021) (Ensifer meliloti).